The sequence spans 271 residues: Probable ribosomal RNA small subunit methyltransferase A (271 aa).

Residues Leu12, Gly37, Glu58, Asp83, and Asn100 each coordinate S-adenosyl-L-methionine.

This sequence belongs to the class I-like SAM-binding methyltransferase superfamily. rRNA adenine N(6)-methyltransferase family. RsmA subfamily.

It localises to the cytoplasm. Specifically dimethylates two adjacent adenosines in the loop of a conserved hairpin near the 3'-end of 16S rRNA in the 30S particle. May play a critical role in biogenesis of 30S subunits. This is Probable ribosomal RNA small subunit methyltransferase A from Methanococcus aeolicus (strain ATCC BAA-1280 / DSM 17508 / OCM 812 / Nankai-3).